A 166-amino-acid chain; its full sequence is Large ribosomal subunit protein uL10 (166 aa).

This sequence belongs to the universal ribosomal protein uL10 family. In terms of assembly, part of the ribosomal stalk of the 50S ribosomal subunit. The N-terminus interacts with L11 and the large rRNA to form the base of the stalk. The C-terminus forms an elongated spine to which L12 dimers bind in a sequential fashion forming a multimeric L10(L12)X complex.

Functionally, forms part of the ribosomal stalk, playing a central role in the interaction of the ribosome with GTP-bound translation factors. The sequence is that of Large ribosomal subunit protein uL10 from Pseudomonas putida (strain GB-1).